The following is a 266-amino-acid chain: Apolipoprotein A-I (266 aa).

The N-terminal stretch at methionine 1–alanine 18 is a signal peptide. 2 tandem repeats follow at residues leucine 67 to glycine 88 and proline 89 to serine 110. A 10 X approximate tandem repeats region spans residues leucine 67–glutamine 266. A Methionine sulfoxide modification is found at methionine 109. Residues lysine 111–glutamine 121 form a 3; half-length repeat. Repeat copies occupy residues proline 122 to alanine 143, proline 144 to serine 165, proline 166 to alanine 187, proline 188 to glycine 209, and alanine 210 to lysine 231. A 9; half-length repeat occupies proline 232–leucine 242. Residues proline 243 to glutamine 266 form repeat 10.

The protein belongs to the apolipoprotein A1/A4/E family. Homodimer. Interacts with APOA1BP and CLU. Component of a sperm activating protein complex (SPAP), consisting of APOA1, an immunoglobulin heavy chain, an immunoglobulin light chain and albumin. Interacts with NDRG1. Interacts with SCGB3A2. Interacts with NAXE and YJEFN3. Post-translationally, glycosylated. Palmitoylated. In terms of processing, phosphorylation sites are present in the extracellular medium.

It localises to the secreted. Functionally, participates in the reverse transport of cholesterol from tissues to the liver for excretion by promoting cholesterol efflux from tissues and by acting as a cofactor for the lecithin cholesterol acyltransferase (LCAT). As part of the SPAP complex, activates spermatozoa motility. The polypeptide is Apolipoprotein A-I (APOA1) (Mirounga angustirostris (Northern elephant seal)).